A 360-amino-acid polypeptide reads, in one-letter code: Protein NDRG2 (360 aa).

The tract at residues 325–360 (RTASLSSEGNRSRSRTLSQSSESGGGPPAPLAEVTC) is disordered.

This sequence belongs to the NDRG family.

It localises to the cytoplasm. In terms of biological role, contributes to the regulation of the Wnt signaling pathway. Down-regulates CTNNB1-mediated transcriptional activation of target genes. May be involved in neuron differentiation. The chain is Protein NDRG2 from Xenopus tropicalis (Western clawed frog).